The sequence spans 423 residues: MATATRLLGWRVASWRMRPPPAGFVSQRAHSLLPVDDAINGLSEEQRQLRQTVAKFLQEHLAPKAQEIDRSNEFKNLREFWKQLGNLGVLGITAPVQYGGSGLGYLEHVLVMEEISRASGAVGLSYGAHSNLCINQLVRNGNEAQKEKYLPKLISGEYIGALAMSEPNAGSDVVSMKLKAEKKGNHYILNGNKFWITNGPDADVLIVYAKTDLAAVPASRGITAFIVEKGMPGFSTSKKLDKLGMRGSNTCELIFEDCKVPAANILGHENKGVYVLMSGLDLERLVLAGGPLGLMQAVLDHTIPYLHVREAFGQKIGHFQLMQGKMADMYTRLMACRQYVYNVAKACDEGHCTAKDCAGVILYSAECATQVALDGIQCFGGNGYINDFPMGRFLRDAKLYEIGAGTSEVRRLVIGRAFNADFH.

The transit peptide at M1–A29 directs the protein to the mitochondrion. K55, K64, and K75 each carry N6-acetyllysine; alternate. 3 positions are modified to N6-succinyllysine; alternate: K55, K64, and K75. FAD-binding positions include L162–S171 and W195–T197. S171 lines the substrate pocket. Position 219–220 (S219–R220) interacts with substrate. At K238 the chain carries N6-acetyllysine. K259 carries the N6-acetyllysine; alternate modification. K259 carries the post-translational modification N6-succinyllysine; alternate. Substrate is bound by residues Y274 and D281 to R284. Residue E283 is the Proton acceptor of the active site. FAD is bound at residue R309. K315 bears the N6-succinyllysine mark. Residues Q320 and Q377–G381 each bind FAD. A404–G405 is a substrate binding site. Residue T406 to E408 participates in FAD binding.

This sequence belongs to the acyl-CoA dehydrogenase family. Homotetramer. The cofactor is FAD.

Its subcellular location is the mitochondrion matrix. The enzyme catalyses 3-methylbutanoyl-CoA + oxidized [electron-transfer flavoprotein] + H(+) = 3-methylbut-2-enoyl-CoA + reduced [electron-transfer flavoprotein]. It carries out the reaction pentanoyl-CoA + oxidized [electron-transfer flavoprotein] + H(+) = (2E)-pentenoyl-CoA + reduced [electron-transfer flavoprotein]. It catalyses the reaction hexanoyl-CoA + oxidized [electron-transfer flavoprotein] + H(+) = (2E)-hexenoyl-CoA + reduced [electron-transfer flavoprotein]. The catalysed reaction is butanoyl-CoA + oxidized [electron-transfer flavoprotein] + H(+) = (2E)-butenoyl-CoA + reduced [electron-transfer flavoprotein]. Its pathway is amino-acid degradation; L-leucine degradation; (S)-3-hydroxy-3-methylglutaryl-CoA from 3-isovaleryl-CoA: step 1/3. Catalyzes the conversion of isovaleryl-CoA/3-methylbutanoyl-CoA to 3-methylbut-2-enoyl-CoA as an intermediate step in the leucine (Leu) catabolic pathway. To a lesser extent, is also able to catalyze the oxidation of other saturated short-chain acyl-CoA thioesters as pentanoyl-CoA, hexenoyl-CoA and butenoyl-CoA. The chain is Isovaleryl-CoA dehydrogenase, mitochondrial (IVD) from Pongo abelii (Sumatran orangutan).